The sequence spans 398 residues: Maltoporin (398 aa).

Positions 1 to 30 (MTDKNNKRLFKVAPLATAIAASLFTVNASA) are cleaved as a signal peptide.

This sequence belongs to the porin LamB (TC 1.B.3) family. Homotrimer formed of three 18-stranded antiparallel beta-barrels, containing three independent channels.

It is found in the cell outer membrane. The enzyme catalyses beta-maltose(in) = beta-maltose(out). In terms of biological role, involved in the transport of maltose and maltodextrins. The polypeptide is Maltoporin (Hahella chejuensis (strain KCTC 2396)).